We begin with the raw amino-acid sequence, 428 residues long: Glutamate-1-semialdehyde 2,1-aminomutase (428 aa).

K267 carries the N6-(pyridoxal phosphate)lysine modification.

It belongs to the class-III pyridoxal-phosphate-dependent aminotransferase family. HemL subfamily. In terms of assembly, homodimer. Requires pyridoxal 5'-phosphate as cofactor.

The protein localises to the cytoplasm. It carries out the reaction (S)-4-amino-5-oxopentanoate = 5-aminolevulinate. It participates in porphyrin-containing compound metabolism; protoporphyrin-IX biosynthesis; 5-aminolevulinate from L-glutamyl-tRNA(Glu): step 2/2. This is Glutamate-1-semialdehyde 2,1-aminomutase from Trichlorobacter lovleyi (strain ATCC BAA-1151 / DSM 17278 / SZ) (Geobacter lovleyi).